The sequence spans 419 residues: Dimethylamine methyltransferase MtbB2 (419 aa).

Position 308 (O308) is a non-standard amino acid, pyrrolysine.

Belongs to the dimethylamine methyltransferase family.

The enzyme catalyses Co(I)-[dimethylamine-specific corrinoid protein] + dimethylamine + H(+) = methyl-Co(III)-[dimethylamine-specific corrinoid protein] + methylamine. It functions in the pathway one-carbon metabolism; methanogenesis from dimethylamine. Functionally, catalyzes the transfer of a methyl group from dimethylamine to the corrinoid cofactor of MtbC. No evidence for expression of this protein has been found after growth under presumably inducing conditions. The polypeptide is Dimethylamine methyltransferase MtbB2 (Methanosarcina barkeri).